Here is a 94-residue protein sequence, read N- to C-terminus: Selenoprotein K (94 aa).

The helical transmembrane segment at 20–42 (LSLITDFFWGIAEFVVLFFKTLL) threads the bilayer. The disordered stretch occupies residues 48 to 94 (KRRSYGNSSDSRYDDGRGPPGNPPRRMGRINHLRGPSPPPMAGGUGR). Position 92 (U92) is a non-standard amino acid, selenocysteine.

This sequence belongs to the selenoprotein K family. In terms of assembly, interacts with DERL1, DERL2, DERL3 and SELENOS. The SELENOK-SELENOS complex interacts with VCP. Interacts with ZDHHC6. Post-translationally, cleaved by CAPN2/m-calpain in resting macrophages but not in activated macrophages. Macrophage activation up-regulates expression of the calpain inhibitor CAST/calpastatin, resulting in inhibition of CAPN2 activity. Truncated SELENOK proteins produced by failed UGA/Sec decoding are ubiquitinated by the CRL2(KLHDC2) complex, which recognizes the diglycine (Gly-Gly) at the C-terminus of truncated SELENOK proteins. As to expression, highly expressed in heart.

The protein resides in the endoplasmic reticulum membrane. It is found in the cell membrane. Required for Ca(2+) flux in immune cells and plays a role in T-cell proliferation and in T-cell and neutrophil migration. Involved in endoplasmic reticulum-associated degradation (ERAD) of soluble glycosylated proteins. Required for palmitoylation and cell surface expression of CD36 and involved in macrophage uptake of low-density lipoprotein and in foam cell formation. Together with ZDHHC6, required for palmitoylation of ITPR1 in immune cells, leading to regulate ITPR1 stability and function. Plays a role in protection of cells from ER stress-induced apoptosis. Protects cells from oxidative stress when overexpressed in cardiomyocytes. In Homo sapiens (Human), this protein is Selenoprotein K.